A 159-amino-acid polypeptide reads, in one-letter code: Small ribosomal subunit protein uS9 (159 aa).

It belongs to the universal ribosomal protein uS9 family.

The sequence is that of Small ribosomal subunit protein uS9 from Bradyrhizobium diazoefficiens (strain JCM 10833 / BCRC 13528 / IAM 13628 / NBRC 14792 / USDA 110).